Here is a 27-residue protein sequence, read N- to C-terminus: Caerulein precursor fragment R5 (27 aa).

Expressed by the skin glands.

Its subcellular location is the secreted. Functionally, antimicrobial peptide. The chain is Caerulein precursor fragment R5 from Xenopus ruwenzoriensis (Uganda clawed frog).